The primary structure comprises 155 residues: Methylated-DNA--protein-cysteine methyltransferase (155 aa).

Cys119 (nucleophile; methyl group acceptor) is an active-site residue.

The protein belongs to the MGMT family.

It localises to the cytoplasm. The enzyme catalyses a 6-O-methyl-2'-deoxyguanosine in DNA + L-cysteinyl-[protein] = S-methyl-L-cysteinyl-[protein] + a 2'-deoxyguanosine in DNA. It catalyses the reaction a 4-O-methyl-thymidine in DNA + L-cysteinyl-[protein] = a thymidine in DNA + S-methyl-L-cysteinyl-[protein]. Functionally, involved in the cellular defense against the biological effects of O6-methylguanine (O6-MeG) and O4-methylthymine (O4-MeT) in DNA. Repairs the methylated nucleobase in DNA by stoichiometrically transferring the methyl group to a cysteine residue in the enzyme. This is a suicide reaction: the enzyme is irreversibly inactivated. This Sulfolobus acidocaldarius (strain ATCC 33909 / DSM 639 / JCM 8929 / NBRC 15157 / NCIMB 11770) protein is Methylated-DNA--protein-cysteine methyltransferase.